Consider the following 235-residue polypeptide: Probable 2-phosphosulfolactate phosphatase (235 aa).

Belongs to the ComB family. Mg(2+) serves as cofactor.

It carries out the reaction (2R)-O-phospho-3-sulfolactate + H2O = (2R)-3-sulfolactate + phosphate. This Clostridium novyi (strain NT) protein is Probable 2-phosphosulfolactate phosphatase.